Reading from the N-terminus, the 439-residue chain is MAQFFKPQKKSTQPQRIEFTVDSLDHHCVGIGRHQGKAIFIEGALPGEQVKARILDDKKQYAHAALQQVVTPAANRIAPFCNHYRECGGCNAQHLGEADQQAAKEAGLVSLFERLGQIKAPVLEPVLTGESRAYRRVCRLAIKFDKNGRCTRVGFRRRQSNDLVEIEGCPVLAEPLSALIAPLRECLNRLKSQRELGHAELIQAEQGIMMLLRHTGRPNEADRALLVAFAKSQGIDLYLQAADERIEPLHQVFQPSYSLDGLSLAFAPGDFIQVNGPINQSMVAQALAWLGASKDDKVLDLFCGIGNFTLPLARQAREVVGVEGDLAMVARAEENARRNGIDNARFYKADLSGDIVGMSWAREGFDLVLLDPARPGALEVMGHVVKLSPKRVVYVSCNPVTLARDSQVLVKGGYRLVRLGMLDMFPHTGHLESMALFEQ.

A TRAM domain is found at 10–68; the sequence is KSTQPQRIEFTVDSLDHHCVGIGRHQGKAIFIEGALPGEQVKARILDDKKQYAHAALQQ. [4Fe-4S] cluster is bound by residues C81, C87, C90, and C169. The S-adenosyl-L-methionine site is built by Q273, F302, N307, E323, D350, and D371. The active-site Nucleophile is the C397.

The protein belongs to the class I-like SAM-binding methyltransferase superfamily. RNA M5U methyltransferase family. RlmD subfamily.

It catalyses the reaction uridine(1939) in 23S rRNA + S-adenosyl-L-methionine = 5-methyluridine(1939) in 23S rRNA + S-adenosyl-L-homocysteine + H(+). In terms of biological role, catalyzes the formation of 5-methyl-uridine at position 1939 (m5U1939) in 23S rRNA. This is 23S rRNA (uracil(1939)-C(5))-methyltransferase RlmD from Aeromonas salmonicida (strain A449).